We begin with the raw amino-acid sequence, 280 residues long: Purine nucleoside phosphorylase (280 aa).

Residues Ser15 and 55–56 each bind phosphate; that span reads RH. Met194 provides a ligand contact to substrate. Thr195 lines the phosphate pocket. 218–220 lines the substrate pocket; it reads DLD.

This sequence belongs to the PNP/MTAP phosphorylase family. MTAP subfamily. As to quaternary structure, homohexamer. Dimer of a homotrimer.

The catalysed reaction is a purine D-ribonucleoside + phosphate = a purine nucleobase + alpha-D-ribose 1-phosphate. It participates in purine metabolism; purine nucleoside salvage. Purine nucleoside phosphorylase involved in purine salvage. In Streptomyces coelicolor (strain ATCC BAA-471 / A3(2) / M145), this protein is Purine nucleoside phosphorylase.